We begin with the raw amino-acid sequence, 256 residues long: Pimeloyl-[acyl-carrier protein] methyl ester esterase (256 aa).

Positions 15-242 constitute an AB hydrolase-1 domain; that stretch reads HLVLLHGWGL…AAHAPFISHP (228 aa). Residues Trp-22, 82 to 83, and 143 to 147 contribute to the substrate site; these read SL and FLALQ. The active-site Nucleophile is the Ser-82. Residues Asp-207 and His-235 contribute to the active site. Residue His-235 participates in substrate binding.

It belongs to the AB hydrolase superfamily. Carboxylesterase BioH family. In terms of assembly, monomer.

Its subcellular location is the cytoplasm. It catalyses the reaction 6-carboxyhexanoyl-[ACP] methyl ester + H2O = 6-carboxyhexanoyl-[ACP] + methanol + H(+). The protein operates within cofactor biosynthesis; biotin biosynthesis. Functionally, the physiological role of BioH is to remove the methyl group introduced by BioC when the pimeloyl moiety is complete. It allows to synthesize pimeloyl-ACP via the fatty acid synthetic pathway through the hydrolysis of the ester bonds of pimeloyl-ACP esters. This chain is Pimeloyl-[acyl-carrier protein] methyl ester esterase, found in Shigella boydii serotype 18 (strain CDC 3083-94 / BS512).